A 310-amino-acid polypeptide reads, in one-letter code: Homoserine kinase (310 aa).

An ATP-binding site is contributed by 91 to 101 (PIGSGLGSSAC).

This sequence belongs to the GHMP kinase family. Homoserine kinase subfamily.

The protein resides in the cytoplasm. The enzyme catalyses L-homoserine + ATP = O-phospho-L-homoserine + ADP + H(+). The protein operates within amino-acid biosynthesis; L-threonine biosynthesis; L-threonine from L-aspartate: step 4/5. Catalyzes the ATP-dependent phosphorylation of L-homoserine to L-homoserine phosphate. The sequence is that of Homoserine kinase from Escherichia coli O17:K52:H18 (strain UMN026 / ExPEC).